Reading from the N-terminus, the 279-residue chain is NH(3)-dependent NAD(+) synthetase (279 aa).

Position 46-53 (46-53) interacts with ATP; it reads GVSGGQDS. Asp-52 contacts Mg(2+). Arg-139 is a binding site for deamido-NAD(+). Thr-159 provides a ligand contact to ATP. Glu-164 is a Mg(2+) binding site. The deamido-NAD(+) site is built by Lys-172 and Asp-179. 2 residues coordinate ATP: Lys-188 and Thr-210. Deamido-NAD(+) is bound at residue 259 to 260; that stretch reads HK.

The protein belongs to the NAD synthetase family. Homodimer.

It catalyses the reaction deamido-NAD(+) + NH4(+) + ATP = AMP + diphosphate + NAD(+) + H(+). It functions in the pathway cofactor biosynthesis; NAD(+) biosynthesis; NAD(+) from deamido-NAD(+) (ammonia route): step 1/1. Catalyzes the ATP-dependent amidation of deamido-NAD to form NAD. Uses ammonia as a nitrogen source. The sequence is that of NH(3)-dependent NAD(+) synthetase from Leifsonia xyli subsp. xyli (strain CTCB07).